Reading from the N-terminus, the 309-residue chain is Elongation factor Ts (309 aa).

An involved in Mg(2+) ion dislocation from EF-Tu region spans residues 82 to 85; it reads TDFV.

The protein belongs to the EF-Ts family.

Its subcellular location is the cytoplasm. Its function is as follows. Associates with the EF-Tu.GDP complex and induces the exchange of GDP to GTP. It remains bound to the aminoacyl-tRNA.EF-Tu.GTP complex up to the GTP hydrolysis stage on the ribosome. This is Elongation factor Ts from Rickettsia massiliae (strain Mtu5).